A 91-amino-acid polypeptide reads, in one-letter code: Small ribosomal subunit protein bS20 (91 aa).

Residues 72 to 91 (KNAASRQKSRLAKKLNGLSA) form a disordered region.

Belongs to the bacterial ribosomal protein bS20 family.

Binds directly to 16S ribosomal RNA. The sequence is that of Small ribosomal subunit protein bS20 from Halalkalibacterium halodurans (strain ATCC BAA-125 / DSM 18197 / FERM 7344 / JCM 9153 / C-125) (Bacillus halodurans).